A 343-amino-acid polypeptide reads, in one-letter code: Protease HtpX homolog (343 aa).

2 consecutive transmembrane segments (helical) span residues 7–24 (TMLL…GYLV) and 29–46 (GMVV…FSYW). Residue H130 participates in Zn(2+) binding. Residue E131 is part of the active site. H134 provides a ligand contact to Zn(2+). Transmembrane regions (helical) follow at residues 145–165 (LTAT…LMGM) and 177–197 (GAGM…AMLV). E206 provides a ligand contact to Zn(2+). The interval 308-343 (NLEDEDLNPEAQNGFTHNQKKKTVRRGKDRPTWLRH) is disordered. Positions 325–335 (NQKKKTVRRGK) are enriched in basic residues.

This sequence belongs to the peptidase M48B family. Requires Zn(2+) as cofactor.

The protein resides in the cell inner membrane. This is Protease HtpX homolog from Bartonella bacilliformis (strain ATCC 35685 / KC583 / Herrer 020/F12,63).